An 846-amino-acid chain; its full sequence is Protein kintoun (846 aa).

Disordered regions lie at residues 216–240, 372–405, 574–631, and 762–846; these read TAEE…GKPE, LRHF…DSKA, QALK…ESAC, and KKNQ…EMDD. Residues 372–382 show a composition bias toward basic and acidic residues; it reads LRHFSREDSGV. The residue at position 380 (serine 380) is a Phosphoserine. The segment covering 391-400 has biased composition (acidic residues); the sequence is PVEEDPDGEL. Basic and acidic residues predominate over residues 583-603; that stretch reads GTKEEEEKGNQDQEPESDKQH. 2 stretches are compositionally biased toward basic residues: residues 611–622 and 762–776; these read KAGKKQRKRNKK and KKNQ…RAQQ. Residue serine 780 is modified to Phosphoserine. The segment covering 795–809 has biased composition (polar residues); the sequence is LKQQENQSRNCNKPN.

Belongs to the PIH1 family. Kintoun subfamily. Interacts with Pp1alpha-96A, Pp1-87B, Pp1-13C and flw.

The protein resides in the cytoplasm. Functionally, required for cytoplasmic pre-assembly of axonemal dyneins, thereby playing a central role in motility in cilia and flagella. Involved in pre-assembly of dynein arm complexes in the cytoplasm before intraflagellar transport loads them for the ciliary compartment. In Drosophila yakuba (Fruit fly), this protein is Protein kintoun.